The sequence spans 65 residues: Large ribosomal subunit protein bL35 (65 aa).

This sequence belongs to the bacterial ribosomal protein bL35 family.

The protein is Large ribosomal subunit protein bL35 of Borrelia turicatae (strain 91E135).